We begin with the raw amino-acid sequence, 2768 residues long: MMTLVLWVSTLLSSVCLVAANIFEYQVDAQPLRPCELQREKAFLKQDEYVPQCSEDGSFQTVQCQNDGQSCWCVDSDGTEVPGSRQLGRPTACLSFCQLHKQRILLSSYINSTDALYLPQCQDSGNYAPVQCDLQQVQCWCVDTEGMEVYGTRQQGRPTRCPRSCEIRSRRLLHGVGDKSPPQCDADGEFMPVQCKFVNTTDMMIFDLIHNYNRFPDAFVTFSAFRNRFPEVSGYCYCADSQGRELAETGLELLLDEIYDTIFAGLDQASTFTQSTMYRILQRRFLAIQLVISGRFRCPTKCEVEQFTATSFGHPYIPSCHRDGHYQTVQCQMERMCWCVDAQGIEIPGTRQQGQPLFCAKDQSCASERQQALSRLYFETPGYFSPQDLLSSEDRLVPVSGARLDISCPPRIKELFVDSGLLRSIAVERYQQLSESRSLLREAIRAIFPSRELAGLALQFTTNPKRLQQNLFGGTFLVNAAQLNLSGALGTRSTFNFSQFFQQFGLPGFLVRDRATDLAKLLPVSLDSSPTPVPLRVPEKRVAMNKSVVGTFGFKVNLQENQDALKFLVSLMELPEFLVFLQRAVSVPEDRARDLGDVMEMVFSAQACKQTSGRFFVPSCTAEGSYEDIQCYAGECWCVNSQGKEVEGSRVSGGHPRCPTKCEKQRAQMQNLAGAQPAGSSFFVPTCTSEGYFLPVQCFNSECYCVDAEGQVIPGTQSTIGEPKLCPSVCQLQAEQAFLGVVGVLLSNSSMVPPISSVYIPQCSTSGQWMPVQCDGPHEQVFEWYERWNTQNSDGQELTTATLLMKLMSYREVASTNFSLFLQSLYDAGQQSIFPVLAQYPSLQDVPQVVLEGATIQPGENIFLDPYIFWQILNGQLSQYPGPYSDFSMPLEHFNLRSCWCVDEAGQELDGTRTRAGEIPACPGPCEEVKFRVLKFIKETEEIVSASNASSFPLGESFLVAKGIQLTSEELGLPPLYPSREAFSEKFLRGSEYAIRLAAQSTLTFYQKLRASLGESNGTASLLWSGPYMPQCNTIGGWEPVQCHPGTGQCWCVDGWGELIPGSLMARSSQMPQCPTSCELSRANGLISAWKQAGHQRNPGPGDLFTPVCLQTGEYVRQQTSGTGAWCVDPSSGEGVPTNTNSSAQCPGLCDALKSRVLSRKVGLGYTPVCEALDGGFSPVQCDLAQGSCWCVLASGEEVPGTRVVGTQPACESPQCPLPFSGSDVTDGVVFCETASSSGVTTVQQCQLFCRQGLRNVFSPGPLICNLESQRWVTLPLPRACQRPQLWQTMQTQAHFQLLLPPGKMCSIDYSGLLQAFQVFILDELITRGFCQIQVKTFGTLVSRTVCDNSSIQVGCLTAERLGVNATWKLQLEDISVGSLPNLHSIERALMGQDLLGRFANLIQSGKFQLHLDSKTFSADTILYFLNGDRFVTSPMTQLGCLEGFYRVSTTSQDPLGCVKCPEGSFSQDGKCTPCPAGTYQGQAGSSACIPCPRGRTTTITGAFSKTHCVTDCQRDEAGLQCDQNGQYQANQKDMDSGEVFCVDSEGQRLQWLQTEAGLSESQCLMMRKFEKAPESKVIFDASSPVIVKSRVPSANSPLVQCLADCADDEACSFVTVSSMSSEVSCDLYSWTRDNFACVTSDQEEDAVDSLKETSFGSLRCQVKVRNSGKDSLAVYVKKGHEFTASGQKSFEPTGFQNVLSGLYSSVVFSALGTNLTDTHLFCLLACDQDSCCDGFIVTQVKEGPTICGLLSAPDILVCHINDWRDASDTQANGTCAGVTYDQGSRQMTMSLGGQEFLQGLTLLEGTQDSFISFQQVYLWKDSDIGSRPESMGCGRGMVPKSEAPEGADMATELFSPVDITQVIVNTSHSLPSQQYWLSTHLFSAEQANLWCLSRCAQEPVFCQLADIMESSSLYFTCSLYPEAQVCDNDVESNAKNCSQILPRQPTALFQRKVVLNDRVKNFYTRLPFQKLSGISIRDRIPMSEKLISNGFFECERLCDRDPCCTGFGFLNVSQMQGGEMTCLTLNSMGIQTCSEENGATWRILDCGSEDTEVHTYPFGWYQKPAVWSDAPSFCPSAALQSLTEEKVALDSWQTLALSSVIIDPSIKHFDVAHISISATRNFSLAQDFCLQECSRHQDCLVTTLQIQQGVVRCVFYPDIQSCEHSLRSKTCWLLLHEEAAYIYRKSGAPLHQSDGISTPSVHIDSFGQLQGGSQVVKVGTAWKQVYQFLGVPYAAPPLAENRFQAPEVLNWTGSWDATKLRSSCWQPGTRTPTPPQISEDCLYLNVFVPENLVSNASVLVFFHNTVEMEGSGGQLNIDGSILAAVGNLIVVTANYRLGVFGFLSSGSDEVAGNWGLLDQVAALTWVQTHIGAFGGDPQRVTLAADRGGADVASIHLLITRPTRLQLFRKALLMGGSALSPAAIISPDRAQQQAAALAKEVGCPNSSVQEVVSCFRQKPANILNEAQTKLLAVSGPFHYWGPVVDGQYLRELPSRRLKRPLPVKVDLLIGGSQDDGLINRAKAVKQFEESQGRTNSKTAFYQALQNSLGGEDSDARILAAAIWYYSLEHSTDDYASFSRALENATRDYFIICPIVNMASLWARRTRGNVFMYHVPESYGHGSLELLADVQYAFGLPFYSAYQGYFSTEEQSLSLKVMQYFSNFIRSGNPNYPHEFSQKAAEFATPWPDFVPGAGGESYKELSAQLPNRQGLKKADCSFWSKYIQTLKDADGAKDAQLTKSGEEDLEVGPGSEEDFSGSLEPVPKSYSK.

An N-terminal signal peptide occupies residues methionine 1–alanine 20. Position 25 is an iodotyrosine; alternate (tyrosine 25). Tyrosine 25 bears the Sulfotyrosine; alternate mark. Tyrosine 25 carries the post-translational modification Thyroxine; alternate. Tyrosine 25 carries the triiodothyronine; alternate modification. Thyroglobulin type-1 domains lie at leucine 32 to cysteine 93, leucine 94 to cysteine 161, proline 162 to cysteine 298, and proline 299 to cysteine 359. 8 cysteine pairs are disulfide-bonded: cysteine 35/cysteine 53, cysteine 64/cysteine 71, cysteine 73/cysteine 93, cysteine 97/cysteine 121, cysteine 132/cysteine 139, cysteine 141/cysteine 161, cysteine 165/cysteine 184, and cysteine 195/cysteine 236. Iodotyrosine is present on tyrosine 109. N-linked (GlcNAc...) asparagine glycosylation is present at asparagine 111. Residue tyrosine 150 is modified to Iodotyrosine; alternate. Tyrosine 150 is modified (diiodotyrosine; alternate). Asparagine 199 carries an N-linked (GlcNAc...) asparagine glycan. Iodotyrosine occurs at positions 235 and 259. 8 cysteine pairs are disulfide-bonded: cysteine 302/cysteine 320, cysteine 331/cysteine 337, cysteine 339/cysteine 365, cysteine 408/cysteine 608, cysteine 631/cysteine 636, cysteine 638/cysteine 658, cysteine 662/cysteine 687, and cysteine 698/cysteine 703. Residues asparagine 484, asparagine 496, and asparagine 545 are each glycosylated (N-linked (GlcNAc...) asparagine). 6 consecutive Thyroglobulin type-1 domains span residues alanine 605–cysteine 658, proline 659–cysteine 726, proline 727–cysteine 922, proline 923–cysteine 1074, proline 1075–cysteine 1146, and proline 1147–cysteine 1211. Tyrosine 704 is modified (iodotyrosine; alternate). Tyrosine 704 is modified (thyroxine; alternate). At tyrosine 704 the chain carries Triiodothyronine; alternate. Tyrosine 704 carries the diiodotyrosine; alternate modification. Disulfide bonds link cysteine 705–cysteine 726, cysteine 730–cysteine 763, cysteine 774–cysteine 899, cysteine 901–cysteine 922, cysteine 926–cysteine 1032, cysteine 1043–cysteine 1050, cysteine 1052–cysteine 1074, cysteine 1078–cysteine 1109, cysteine 1127–cysteine 1146, cysteine 1150–cysteine 1170, cysteine 1182–cysteine 1189, cysteine 1191–cysteine 1211, cysteine 1216–cysteine 1265, cysteine 1232–cysteine 1246, cysteine 1306–cysteine 1356, and cysteine 1331–cysteine 1347. Asparagine 748 carries N-linked (GlcNAc...) asparagine glycosylation. Position 785 is an iodotyrosine (tyrosine 785). Asparagine 817 carries an N-linked (GlcNAc...) asparagine glycan. Tyrosine 867 carries the post-translational modification Iodotyrosine; alternate. Tyrosine 867 carries the post-translational modification Diiodotyrosine; alternate. A Diiodotyrosine modification is found at tyrosine 884. N-linked (GlcNAc...) asparagine glycosylation occurs at asparagine 948. Iodotyrosine; alternate is present on tyrosine 993. Tyrosine 993 is modified (diiodotyrosine; alternate). N-linked (GlcNAc...) asparagine glycosylation is present at asparagine 1017. N-linked (GlcNAc...) asparagine glycosylation is present at asparagine 1141. Tyrosine 1310 carries the post-translational modification Iodotyrosine. Residue tyrosine 1310 is modified to Thyroxine. Residues asparagine 1349 and asparagine 1365 are each glycosylated (N-linked (GlcNAc...) asparagine). Intrachain disulfides connect cysteine 1441/cysteine 1458, cysteine 1461/cysteine 1472, cysteine 1475/cysteine 1489, cysteine 1492/cysteine 1509, cysteine 1513/cysteine 1522, cysteine 1542/cysteine 1564, cysteine 1602/cysteine 1626, cysteine 1606/cysteine 1612, and cysteine 1638/cysteine 1661. 3 Type II repeats span residues proline 1455–glutamine 1468, aspartate 1469–glycine 1485, and serine 1486–glycine 1502. Residues valine 1510–cysteine 1564 enclose the Thyroglobulin type-1 11 domain. One copy of the Type IIIA repeat lies at cysteine 1602–phenylalanine 1722. Asparagine 1715 carries an N-linked (GlcNAc...) asparagine glycan. Cystine bridges form between cysteine 1723–cysteine 1748, cysteine 1727–cysteine 1733, cysteine 1732–cysteine 1834, and cysteine 1759–cysteine 1776. The Type IIIB repeat unit spans residues cysteine 1723 to tryptophan 1891. N-linked (GlcNAc...) asparagine glycosylation is found at asparagine 1773 and asparagine 1866. 7 disulfides stabilise this stretch: cysteine 1892-cysteine 1918, cysteine 1896-cysteine 1903, cysteine 1927-cysteine 1938, cysteine 1995-cysteine 2023, cysteine 1999-cysteine 2005, cysteine 2004-cysteine 2075, and cysteine 2034-cysteine 2047. A Type IIIA repeat occupies cysteine 1892–glutamate 1994. Asparagine 1937 carries an N-linked (GlcNAc...) asparagine glycan. Residues cysteine 1995–glutamine 2127 form a Type IIIB repeat. Asparagine 2012 carries an N-linked (GlcNAc...) asparagine glycan. N-linked (GlcNAc...) asparagine glycosylation occurs at asparagine 2122. The stretch at aspartate 2128–arginine 2185 is one Type IIIA repeat. Cystine bridges form between cysteine 2130/cysteine 2154, cysteine 2134/cysteine 2140, and cysteine 2163/cysteine 2172. Tyrosine 2184 carries the iodotyrosine modification. The interval glycine 2188–lysine 2768 is cholinesterase-like (ChEL). Residue asparagine 2251 is glycosylated (N-linked (GlcNAc...) asparagine). A disulfide bridge links cysteine 2265 with cysteine 2282. Asparagine 2296 and asparagine 2445 each carry an N-linked (GlcNAc...) asparagine glycan. Cysteines 2443 and 2454 form a disulfide. At tyrosine 2541 the chain carries Thyroxine. Tyrosine 2574 carries the iodotyrosine; alternate modification. Tyrosine 2574 is modified (thyroxine; alternate). At tyrosine 2574 the chain carries Triiodothyronine; alternate. Residue tyrosine 2574 is modified to Diiodotyrosine; alternate. Asparagine 2583 carries an N-linked (GlcNAc...) asparagine glycan. An iodotyrosine mark is found at tyrosine 2588 and tyrosine 2618. Cysteine 2592 and cysteine 2716 are joined by a disulfide. Tyrosine 2698 is subject to Diiodotyrosine. The disordered stretch occupies residues glycine 2731–lysine 2768. The segment covering glutamate 2743–phenylalanine 2755 has biased composition (acidic residues). An Iodotyrosine; alternate modification is found at tyrosine 2766. A Thyroxine; alternate modification is found at tyrosine 2766. Position 2766 is a triiodothyronine; alternate (tyrosine 2766). Tyrosine 2766 carries the diiodotyrosine; alternate modification.

It belongs to the type-B carboxylesterase/lipase family. As to quaternary structure, monomer. Homodimer (via ChEL region); occurs in the endoplasmic reticulum and is required for export to the Golgi apparatus. Homooligomer; disulfide-linked; stored in this form in the thyroid follicle lumen. Iodinated on tyrosine residues by TPO. There are 4 pairs of iodinated tyrosines used for coupling: acceptor Tyr-25 is coupled to donor Tyr-150 or Tyr-235, acceptor Tyr-2574 is coupled to donor Tyr-2541, acceptor Tyr-2766 in monomer 1 is coupled to donor Tyr-2766 in monomer 2 and acceptor Tyr-1310 in monomer 1 is coupled to donor Tyr-109 in monomer 2. Post-translationally, sulfated tyrosines are desulfated during iodination. In terms of processing, undergoes sequential proteolysis by cathepsins to release thyroxine (T4) and triiodothyronine (T3) hormones. In the thyroid follicle lumen, cross-linked TG (storage form) is solubilized by limited proteolysis mediated by cathepsins CTSB and/or CTSL. Partially cleaved TG is further processed by CTSK/cathepsin K and/or CTSL resulting in the release of thyroxine (T4). Following endocytosis, further processing occurs leading to the release of triiodothyronine (T3) and more T4 hormones. In terms of tissue distribution, specifically expressed in the thyroid gland.

The protein resides in the secreted. In terms of biological role, acts as a substrate for the production of iodinated thyroid hormones thyroxine (T4) and triiodothyronine (T3). The synthesis of T3 and T4 involves iodination of selected tyrosine residues of TG/thyroglobulin followed by their oxidative coupling. Following TG re-internalization and lysosomal-mediated proteolysis, T3 and T4 are released from the polypeptide backbone leading to their secretion into the bloodstream. One dimer produces 7 thyroid hormone molecules. This chain is Thyroglobulin (Tg), found in Rattus norvegicus (Rat).